The primary structure comprises 501 residues: Capsid protein (501 aa).

The disordered stretch occupies residues 78–98 (SEEGFPVEPKTEEKDIPSTSG). The Nuclear localization signal motif lies at 122 to 125 (KRGF). A CCHC-type zinc finger spans residues 431 to 448 (CKCWICHEEGHYANECPK).

It belongs to the caulimoviridae capsid protein family. As to quaternary structure, interacts (via nuclear localization signal) with host importin alpha.

Its subcellular location is the virion. It is found in the host nucleus. Self assembles to form an icosahedral capsid, about 50 nm in diameter, nm, composed of 420 subunits of the viral capsid protein. The capsid encapsulates the genomic dsDNA. Following virus entry into host cell, provides nuclear import of the viral genome. Virus particles do not enter the nucleus, but dock at the nuclear membrane through the interaction with host importins. This is Capsid protein from Cestrum parqui (CmYLCV).